Here is a 238-residue protein sequence, read N- to C-terminus: Uridylate kinase (238 aa).

Residue 12–15 (KLSG) participates in ATP binding. Gly54 lines the UMP pocket. ATP is bound by residues Gly55 and Arg59. UMP-binding positions include Asp74 and 135–142 (TGNPFFTT). Thr162, Tyr168, and Asp171 together coordinate ATP.

It belongs to the UMP kinase family. Homohexamer.

The protein localises to the cytoplasm. The catalysed reaction is UMP + ATP = UDP + ADP. The protein operates within pyrimidine metabolism; CTP biosynthesis via de novo pathway; UDP from UMP (UMPK route): step 1/1. Its activity is regulated as follows. Inhibited by UTP. Its function is as follows. Catalyzes the reversible phosphorylation of UMP to UDP. The polypeptide is Uridylate kinase (Methylobacillus flagellatus (strain ATCC 51484 / DSM 6875 / VKM B-1610 / KT)).